We begin with the raw amino-acid sequence, 615 residues long: Zinc finger protein 181 (615 aa).

The KRAB domain maps to 48-120 (VTFSDVAIDF…EKKLSKGLIP (73 aa)). Glycyl lysine isopeptide (Lys-Gly) (interchain with G-Cter in SUMO2) cross-links involve residues Lys153 and Lys170. 11 C2H2-type zinc fingers span residues 281–303 (YTCS…WRIH), 309–331 (YECR…LISH), 337–359 (YKCI…QSTH), 365–387 (YECM…LRIH), 393–415 (YECR…QKIH), 421–443 (YECR…QRIH), 449–471 (YECN…QSIH), 477–499 (FECQ…LRNH), 505–527 (YECS…HRIH), 533–555 (YECI…QRIH), and 561–583 (YKCN…QRVH).

Belongs to the krueppel C2H2-type zinc-finger protein family.

The protein resides in the nucleus. In terms of biological role, may be involved in transcriptional regulation. The chain is Zinc finger protein 181 (ZNF181) from Pongo abelii (Sumatran orangutan).